A 317-amino-acid chain; its full sequence is Gluconeogenesis factor (317 aa).

This sequence belongs to the gluconeogenesis factor family.

Its subcellular location is the cytoplasm. In terms of biological role, required for morphogenesis under gluconeogenic growth conditions. Required, in gluconeogenic growth conditions, for the correct localization of PBP1 and hence for displaying a normal rod shape. This is Gluconeogenesis factor (mgfK) from Bacillus subtilis (strain 168).